The primary structure comprises 456 residues: General transcription factor IIE subunit 1 (456 aa).

Residues 11 to 100 (LDDLVKMVIR…LWYIDYKHII (90 aa)) enclose the HTH TFE/IIEalpha-type domain. The segment at 129–157 (CQTCHKVYTALDIPKLLNMDTGALACEIC) adopts a C4-type zinc-finger fold. The segment at 345-402 (ESAPDSGDADGNGSNSGSGGSTIEGNDGGNGEHQNKKMKLDDSQTVSSMSQSDDDGKD) is disordered. Residues 347–357 (APDSGDADGNG) are compositionally biased toward low complexity. The segment covering 358–375 (SNSGSGGSTIEGNDGGNG) has biased composition (gly residues). Residues 377 to 386 (HQNKKMKLDD) are compositionally biased toward basic and acidic residues.

The protein belongs to the TFIIE alpha subunit family. TFIIE is a tetramer of two alpha and two beta subunits.

Its subcellular location is the nucleus. Its function is as follows. Recruits TFIIH to the initiation complex and stimulates the RNA polymerase II C-terminal domain kinase and DNA-dependent ATPase activities of TFIIH. Both TFIIH and TFIIE are required for promoter clearance by RNA polymerase. This is General transcription factor IIE subunit 1 (gtf2e1-1) from Dictyostelium discoideum (Social amoeba).